The sequence spans 343 residues: Aspartate carbamoyltransferase catalytic subunit (343 aa).

2 residues coordinate carbamoyl phosphate: R91 and T92. K119 contributes to the L-aspartate binding site. Carbamoyl phosphate is bound by residues R141, H171, and Q174. L-aspartate is bound by residues R204 and R259. Residues G300 and P301 each contribute to the carbamoyl phosphate site.

The protein belongs to the aspartate/ornithine carbamoyltransferase superfamily. ATCase family. Heterododecamer (2C3:3R2) of six catalytic PyrB chains organized as two trimers (C3), and six regulatory PyrI chains organized as three dimers (R2).

The enzyme catalyses carbamoyl phosphate + L-aspartate = N-carbamoyl-L-aspartate + phosphate + H(+). It functions in the pathway pyrimidine metabolism; UMP biosynthesis via de novo pathway; (S)-dihydroorotate from bicarbonate: step 2/3. Its function is as follows. Catalyzes the condensation of carbamoyl phosphate and aspartate to form carbamoyl aspartate and inorganic phosphate, the committed step in the de novo pyrimidine nucleotide biosynthesis pathway. The polypeptide is Aspartate carbamoyltransferase catalytic subunit (Burkholderia mallei (strain NCTC 10247)).